The primary structure comprises 1270 residues: Nuclear exosome regulator NRDE2 (1270 aa).

Disordered regions lie at residues 1–22 (MFRAYGNNGLKNPERISGENPD) and 119–209 (SVKS…HTLM). A compositionally biased stretch (polar residues) spans 119 to 135 (SVKSLNGCQDPPETSQQ). Residues 164 to 184 (QRSRSREKKRRKKERRRKRSS) are compositionally biased toward basic residues. Over residues 192–204 (RSRDRSSRARDTS) the composition is skewed to basic and acidic residues.

The protein belongs to the NRDE2 family. Interacts with nrde-3.

Its subcellular location is the nucleus. It is found in the nucleus speckle. The protein resides in the nucleolus. Functionally, protein of the nuclear speckles that regulates RNA exosomal degradation. Involved in short interfering RNAs-mediated silencing in nuclei. Functions with nrde-3 in the nuclear RNA-mediated gene silencing (RNAi) pathway to regulate gene expression via inhibition of RNA polymerases I and II during the elongation phase of transcription. Required for exogenous RNAi-induced H3K27 methylation. This is Nuclear exosome regulator NRDE2 (nrde-2) from Caenorhabditis elegans.